Reading from the N-terminus, the 186-residue chain is Holliday junction branch migration complex subunit RuvA (186 aa).

The domain I stretch occupies residues 1–61; that stretch reads MYRYIKGIVT…EDIFQLYGFK (61 aa). The domain II stretch occupies residues 62-134; the sequence is DEETLNLFLK…LKGKLVNDEL (73 aa). A flexible linker region spans residues 134–137; the sequence is LDMQ. The domain III stretch occupies residues 138-186; that stretch reads LLSDNSKDVAAALEALGYNKKEIAKSLKHVNFDQDLNKALKEALAILLK.

The protein belongs to the RuvA family. Homotetramer. Forms an RuvA(8)-RuvB(12)-Holliday junction (HJ) complex. HJ DNA is sandwiched between 2 RuvA tetramers; dsDNA enters through RuvA and exits via RuvB. An RuvB hexamer assembles on each DNA strand where it exits the tetramer. Each RuvB hexamer is contacted by two RuvA subunits (via domain III) on 2 adjacent RuvB subunits; this complex drives branch migration. In the full resolvosome a probable DNA-RuvA(4)-RuvB(12)-RuvC(2) complex forms which resolves the HJ.

It localises to the cytoplasm. The RuvA-RuvB-RuvC complex processes Holliday junction (HJ) DNA during genetic recombination and DNA repair, while the RuvA-RuvB complex plays an important role in the rescue of blocked DNA replication forks via replication fork reversal (RFR). RuvA specifically binds to HJ cruciform DNA, conferring on it an open structure. The RuvB hexamer acts as an ATP-dependent pump, pulling dsDNA into and through the RuvAB complex. HJ branch migration allows RuvC to scan DNA until it finds its consensus sequence, where it cleaves and resolves the cruciform DNA. The chain is Holliday junction branch migration complex subunit RuvA from Acholeplasma laidlawii (strain PG-8A).